A 1043-amino-acid chain; its full sequence is Polycomb protein Pcl (1043 aa).

Disordered stretches follow at residues 1-34 (MMNN…SAPP), 271-302 (PDST…PLLA), 317-346 (FKTV…AAPS), and 395-422 (KLRK…NTSP). Positions 25–34 (PSTAVPSAPP) are enriched in low complexity. The segment covering 324–344 (PPTPPTPPSPPPPPPAPPVAA) has biased composition (pro residues). In terms of domain architecture, Tudor spans 349–404 (VTYALQEDVFIKCNDGRFYLGTIIDQTSDQYLIRFDDQSEQWCEPDKLRKLGGGSS). Positions 399-412 (LGGGSSITAGGGGA) are enriched in gly residues. PHD-type zinc fingers lie at residues 424–472 (GPMC…CAKP) and 512–560 (QIYC…VFCC). Residues 737–757 (AKKQAAQKADKHDELPLKPDL) are compositionally biased toward basic and acidic residues. Disordered regions lie at residues 737 to 819 (AKKQ…TSSL) and 931 to 985 (AKDL…PGHS). Over residues 783–792 (SRKRKAFRLS) the composition is skewed to basic residues. The segment covering 793-804 (KRYDNSRNHCDL) has biased composition (basic and acidic residues). Phosphoserine occurs at positions 805 and 806. Low complexity predominate over residues 807-819 (DENSSSSRGTSSL). The segment covering 945 to 954 (THGRLLRQRP) has biased composition (basic residues). Residues 955-977 (QKQSPSQSRRNSTSSTATSSSSN) are compositionally biased toward low complexity.

This sequence belongs to the Polycomblike family. As to quaternary structure, component of a form of the Esc/E(z) complex present specifically during early embryogenesis which is composed of Caf1-55, esc, E(z), Su(z)12, Pcl and HDAC1/Rpd3. This complex is distinct from the PRC1 complex, which contains many other PcG proteins like Pc, Ph, Psc, Su(z)2. The two complexes however cooperate and interact together during the first 3 hours of development to establish PcG silencing. Interacts with corto in vitro.

The protein localises to the nucleus. It localises to the chromosome. Polycomb group (PcG) protein. While PcG proteins are generally required to maintain the transcriptionally repressive state of homeotic genes throughout development, this protein is specifically required during the first 6 hours of embryogenesis to establish the repressed state. Component of the Esc/E(z) complex, which methylates 'Lys-9' and 'Lys-27' residues of histone H3, leading to transcriptional repression of the affected target gene. The Esc/E(z) complex is necessary but not sufficient for the repression of homeotic target genes, suggesting that the recruitment of the distinct PRC1 complex is also required. Required for the correct spatial expression of the homeotic genes of the Antennapedia and Bithorax complexes. This is Polycomb protein Pcl (Pcl) from Drosophila melanogaster (Fruit fly).